Reading from the N-terminus, the 1117-residue chain is WD repeat and HMG-box DNA-binding protein 1 (1117 aa).

7 WD repeats span residues 11–50 (GHTE…DPKS), 52–91 (NVGE…GILT), 93–131 (FTTN…QQQT), 134–173 (GHDA…CAVS), 184–223 (VNAK…NPFD), 228–267 (SISQ…CMER), and 271–310 (EKGY…SGKV). Phosphoserine is present on residues Ser333 and Ser377. Lys390 participates in a covalent cross-link: Glycyl lysine isopeptide (Lys-Gly) (interchain with G-Cter in SUMO2). Lys664 bears the N6-acetyllysine mark. A disordered region spans residues 816 to 885 (LAETQSEEEK…NLFQSANSSD (70 aa)). Thr819 carries the post-translational modification Phosphothreonine. Ser821 is subject to Phosphoserine. Residues 861-872 (DTVSEEKPESHN) are compositionally biased toward basic and acidic residues. Positions 873 to 885 (HGQNLFQSANSSD) are enriched in polar residues. Residues Ser910 and Ser923 each carry the phosphoserine modification. Residues 911 to 1005 (SKEPAVSANS…AVCLQNSENQ (95 aa)) are disordered. Positions 917–943 (SANSTRSANILDSMNKSSRKSTSLNRM) are enriched in polar residues. Position 953 is an N6-acetyllysine (Lys953). The segment covering 962–974 (KQASAASYFQKRT) has biased composition (polar residues). Residues 975–987 (PQADKTEEVKENP) show a composition bias toward basic and acidic residues. A compositionally biased stretch (polar residues) spans 988–1004 (KSSSSDAPAVCLQNSEN). The segment at residues 1004–1073 (NQRPKTGFQM…SDGAEAKKRK (70 aa)) is a DNA-binding region (HMG box). Ser1030 is subject to Phosphoserine. The interval 1054–1074 (WTNKAKGETASDGAEAKKRKR) is disordered. Lys1116 participates in a covalent cross-link: Glycyl lysine isopeptide (Lys-Gly) (interchain with G-Cter in SUMO1); alternate. Lys1116 is covalently cross-linked (Glycyl lysine isopeptide (Lys-Gly) (interchain with G-Cter in SUMO2); alternate).

In terms of assembly, trimer. Interacts with the polymerase alpha catalytic subunit POLA1. Interacts with MCM10. Interacts with DNA2. Interacts with CDC45 and GINS2 subunit of GINS complex; these interactions associate WDHD1 with the CMG helicase complex.

The protein resides in the nucleus. It localises to the nucleoplasm. Functionally, core replisome component that acts as a replication initiation factor. Binds directly to the CMG complex and functions as a hub to recruit additional proteins to the replication fork. This is WD repeat and HMG-box DNA-binding protein 1 (Wdhd1) from Mus musculus (Mouse).